A 1327-amino-acid chain; its full sequence is ABC transporter 1 (1327 aa).

The next 6 membrane-spanning stretches (helical) occupy residues Leu-47–Gly-67, Val-100–Phe-120, Lys-170–Val-190, Leu-195–Tyr-215, Val-228–Phe-248, and Val-276–Trp-296. The ABC transmembrane type-1 1 domain occupies Leu-47–Val-326. N-linked (GlcNAc...) asparagine glycosylation is found at Asn-381, Asn-390, and Asn-406. An ABC transporter 1 domain is found at Ile-386–Leu-663. Gly-421–Ser-428 is an ATP binding site. N-linked (GlcNAc...) asparagine glycosylation is found at Asn-463 and Asn-674. Helical transmembrane passes span Phe-743–Phe-763, Phe-785–Trp-805, Leu-859–Ser-881, Ile-888–Met-910, Leu-971–Gly-991, and Phe-1005–Leu-1025. In terms of domain architecture, ABC transmembrane type-1 2 spans Phe-743–Arg-1031. N-linked (GlcNAc...) asparagine glycosylation is present at Asn-1050. A disordered region spans residues Pro-1054–Gly-1081. Positions Val-1084–His-1323 constitute an ABC transporter 2 domain. Gly-1119–Ser-1126 is an ATP binding site.

It belongs to the ABC transporter superfamily. ABCB family. Multidrug resistance exporter (TC 3.A.1.201) subfamily.

The protein localises to the membrane. ABC transporter; part of the gene cluster that mediates the biosynthesis of hydroxamate-containing siderophores that play a critical role in virulence via intracellular iron acquisition during macrophage infection. Probably involved in the excretion of the extracellular siderophores. This chain is ABC transporter 1, found in Ajellomyces capsulatus (Darling's disease fungus).